A 71-amino-acid chain; its full sequence is uncharacterized protein (71 aa).

This is an uncharacterized protein from Bacillus subtilis (strain 168).